The primary structure comprises 284 residues: Type II methyltransferase M1.DpnII (284 aa).

The S-adenosyl-L-methionine site is built by tryptophan 17, lysine 21, glycine 46, aspartate 62, aspartate 177, phenylalanine 178, and aspartate 194.

It belongs to the N(4)/N(6)-methyltransferase family. Monomer. Homodimer.

The catalysed reaction is a 2'-deoxyadenosine in DNA + S-adenosyl-L-methionine = an N(6)-methyl-2'-deoxyadenosine in DNA + S-adenosyl-L-homocysteine + H(+). In terms of biological role, an alpha subtype methylase that recognizes the double-stranded sequence 5'-GATC-3', methylates A-2 on both strands, and protects the DNA from cleavage by the DpnII endonuclease. In Streptococcus pneumoniae, this protein is Type II methyltransferase M1.DpnII.